We begin with the raw amino-acid sequence, 216 residues long: Sugar transporter SWEET1 (216 aa).

Transmembrane regions (helical) follow at residues 3-23 (WMWL…SSGL), 36-56 (ENIQ…WFYY), 65-85 (LMIV…AYLL), 96-116 (QVLV…LWIL), 125-145 (LGLF…ADLA), 157-177 (SFPL…YGLV), and 181-201 (LYIT…FWLF). The MtN3/slv 1 domain occupies 6 to 90 (LLSGACIVFT…GAYLLYSPER (85 aa)). A MtN3/slv 2 domain is found at 124–206 (QLGLFCSVFT…RFWLFSQFPP (83 aa)).

This sequence belongs to the SWEET sugar transporter family.

It is found in the golgi apparatus membrane. It localises to the cell membrane. Its function is as follows. Mediates sugar transport across membranes. In Xenopus laevis (African clawed frog), this protein is Sugar transporter SWEET1 (slc50a1).